Consider the following 504-residue polypeptide: Maturase K (504 aa).

This sequence belongs to the intron maturase 2 family. MatK subfamily.

The protein resides in the plastid. It is found in the chloroplast. In terms of biological role, usually encoded in the trnK tRNA gene intron. Probably assists in splicing its own and other chloroplast group II introns. This chain is Maturase K, found in Quercus coccifera (Kermes oak).